Here is a 217-residue protein sequence, read N- to C-terminus: Pyridoxine/pyridoxamine 5'-phosphate oxidase (217 aa).

Substrate-binding positions include 13–16 (RREY) and lysine 71. Residues 66–71 (RIVLLK), 81–82 (YT), arginine 87, lysine 88, and glutamine 110 contribute to the FMN site. 3 residues coordinate substrate: tyrosine 128, arginine 132, and serine 136. FMN is bound by residues 145-146 (QS) and tryptophan 190. Position 196–198 (196–198 (RLH)) interacts with substrate. Residue arginine 200 coordinates FMN.

Belongs to the pyridoxamine 5'-phosphate oxidase family. Homodimer. It depends on FMN as a cofactor.

The catalysed reaction is pyridoxamine 5'-phosphate + O2 + H2O = pyridoxal 5'-phosphate + H2O2 + NH4(+). It catalyses the reaction pyridoxine 5'-phosphate + O2 = pyridoxal 5'-phosphate + H2O2. Its pathway is cofactor metabolism; pyridoxal 5'-phosphate salvage; pyridoxal 5'-phosphate from pyridoxamine 5'-phosphate: step 1/1. It participates in cofactor metabolism; pyridoxal 5'-phosphate salvage; pyridoxal 5'-phosphate from pyridoxine 5'-phosphate: step 1/1. Catalyzes the oxidation of either pyridoxine 5'-phosphate (PNP) or pyridoxamine 5'-phosphate (PMP) into pyridoxal 5'-phosphate (PLP). The sequence is that of Pyridoxine/pyridoxamine 5'-phosphate oxidase from Proteus mirabilis (strain HI4320).